The following is a 232-amino-acid chain: Large ribosomal subunit protein uL1 (232 aa).

Belongs to the universal ribosomal protein uL1 family. In terms of assembly, part of the 50S ribosomal subunit.

Functionally, binds directly to 23S rRNA. The L1 stalk is quite mobile in the ribosome, and is involved in E site tRNA release. In terms of biological role, protein L1 is also a translational repressor protein, it controls the translation of the L11 operon by binding to its mRNA. This is Large ribosomal subunit protein uL1 from Chlamydia trachomatis serovar L2b (strain UCH-1/proctitis).